Here is a 954-residue protein sequence, read N- to C-terminus: Isoleucine--tRNA ligase (954 aa).

The 'HIGH' region signature appears at 58-68; sequence PYANGDIHIGH. Glutamate 572 serves as a coordination point for L-isoleucyl-5'-AMP. The 'KMSKS' region motif lies at 613–617; that stretch reads KMSKS. Lysine 616 contacts ATP. Zn(2+)-binding residues include cysteine 917, cysteine 920, cysteine 937, and cysteine 940.

Belongs to the class-I aminoacyl-tRNA synthetase family. IleS type 1 subfamily. In terms of assembly, monomer. Requires Zn(2+) as cofactor.

The protein resides in the cytoplasm. The enzyme catalyses tRNA(Ile) + L-isoleucine + ATP = L-isoleucyl-tRNA(Ile) + AMP + diphosphate. In terms of biological role, catalyzes the attachment of isoleucine to tRNA(Ile). As IleRS can inadvertently accommodate and process structurally similar amino acids such as valine, to avoid such errors it has two additional distinct tRNA(Ile)-dependent editing activities. One activity is designated as 'pretransfer' editing and involves the hydrolysis of activated Val-AMP. The other activity is designated 'posttransfer' editing and involves deacylation of mischarged Val-tRNA(Ile). The chain is Isoleucine--tRNA ligase from Photobacterium profundum (strain SS9).